We begin with the raw amino-acid sequence, 415 residues long: Serine hydroxymethyltransferase (415 aa).

(6S)-5,6,7,8-tetrahydrofolate contacts are provided by residues L122 and 126 to 128; that span reads GHL. Residue K230 is modified to N6-(pyridoxal phosphate)lysine.

Belongs to the SHMT family. As to quaternary structure, homodimer. Requires pyridoxal 5'-phosphate as cofactor.

The protein localises to the cytoplasm. It carries out the reaction (6R)-5,10-methylene-5,6,7,8-tetrahydrofolate + glycine + H2O = (6S)-5,6,7,8-tetrahydrofolate + L-serine. It participates in one-carbon metabolism; tetrahydrofolate interconversion. The protein operates within amino-acid biosynthesis; glycine biosynthesis; glycine from L-serine: step 1/1. In terms of biological role, catalyzes the reversible interconversion of serine and glycine with tetrahydrofolate (THF) serving as the one-carbon carrier. This reaction serves as the major source of one-carbon groups required for the biosynthesis of purines, thymidylate, methionine, and other important biomolecules. Also exhibits THF-independent aldolase activity toward beta-hydroxyamino acids, producing glycine and aldehydes, via a retro-aldol mechanism. The protein is Serine hydroxymethyltransferase of Ralstonia pickettii (strain 12J).